Reading from the N-terminus, the 231-residue chain is Ribose-5-phosphate isomerase A (231 aa).

Substrate is bound by residues 31-34 (TGST), 86-89 (DGAD), and 100-103 (KGLG). Glu109 acts as the Proton acceptor in catalysis. Lys127 is a substrate binding site.

Belongs to the ribose 5-phosphate isomerase family. As to quaternary structure, homodimer.

The catalysed reaction is aldehydo-D-ribose 5-phosphate = D-ribulose 5-phosphate. It participates in carbohydrate degradation; pentose phosphate pathway; D-ribose 5-phosphate from D-ribulose 5-phosphate (non-oxidative stage): step 1/1. Its function is as follows. Catalyzes the reversible conversion of ribose-5-phosphate to ribulose 5-phosphate. The polypeptide is Ribose-5-phosphate isomerase A (Gluconobacter oxydans (strain 621H) (Gluconobacter suboxydans)).